A 129-amino-acid chain; its full sequence is Large ribosomal subunit protein bL17 (129 aa).

Belongs to the bacterial ribosomal protein bL17 family. Part of the 50S ribosomal subunit. Contacts protein L32.

This Yersinia enterocolitica serotype O:8 / biotype 1B (strain NCTC 13174 / 8081) protein is Large ribosomal subunit protein bL17.